The chain runs to 207 residues: Small ribosomal subunit protein uS4 (207 aa).

The segment at 30-54 is disordered; the sequence is DKCKLDSKPGQHGRTSGARTSDYGN. The span at 42 to 53 shows a compositional bias: polar residues; it reads GRTSGARTSDYG. In terms of domain architecture, S4 RNA-binding spans 97–160; that stretch reads SRLDNVVYRM…KKQVRIAEAL (64 aa).

The protein belongs to the universal ribosomal protein uS4 family. As to quaternary structure, part of the 30S ribosomal subunit. Contacts protein S5. The interaction surface between S4 and S5 is involved in control of translational fidelity.

Functionally, one of the primary rRNA binding proteins, it binds directly to 16S rRNA where it nucleates assembly of the body of the 30S subunit. Its function is as follows. With S5 and S12 plays an important role in translational accuracy. This Cupriavidus taiwanensis (strain DSM 17343 / BCRC 17206 / CCUG 44338 / CIP 107171 / LMG 19424 / R1) (Ralstonia taiwanensis (strain LMG 19424)) protein is Small ribosomal subunit protein uS4.